The sequence spans 314 residues: Putative SET domain-containing protein L222 (314 aa).

An SET domain is found at 23 to 172 (EYIQVIYQNP…ANTEITISYG (150 aa)).

This sequence belongs to the class V-like SAM-binding methyltransferase superfamily.

The polypeptide is Putative SET domain-containing protein L222 (Acanthamoeba polyphaga mimivirus (APMV)).